The following is a 298-amino-acid chain: Nucleotide-binding protein MAV_3359 (298 aa).

18–25 (GLSGAGRG) contributes to the ATP binding site. 69–72 (DVRS) contacts GTP.

This sequence belongs to the RapZ-like family.

Its function is as follows. Displays ATPase and GTPase activities. The chain is Nucleotide-binding protein MAV_3359 from Mycobacterium avium (strain 104).